Reading from the N-terminus, the 607-residue chain is Elongation factor 4 (607 aa).

Residues 11 to 193 (GKIRNFSIIA…QIVEKVPAPT (183 aa)) form the tr-type G domain. GTP is bound by residues 23 to 28 (DHGKST) and 140 to 143 (NKID).

It belongs to the TRAFAC class translation factor GTPase superfamily. Classic translation factor GTPase family. LepA subfamily.

The protein localises to the cell membrane. The catalysed reaction is GTP + H2O = GDP + phosphate + H(+). Required for accurate and efficient protein synthesis under certain stress conditions. May act as a fidelity factor of the translation reaction, by catalyzing a one-codon backward translocation of tRNAs on improperly translocated ribosomes. Back-translocation proceeds from a post-translocation (POST) complex to a pre-translocation (PRE) complex, thus giving elongation factor G a second chance to translocate the tRNAs correctly. Binds to ribosomes in a GTP-dependent manner. The protein is Elongation factor 4 of Streptococcus pneumoniae (strain Taiwan19F-14).